Reading from the N-terminus, the 158-residue chain is MSKVVNLVRPVVESIIDEHGDMLVNMEYIKEKSQNYLRIYVDREPNGIDIDEIAVLSELISEKLDTLDPDPLPDPYVLELSSPGAERPIKTKADWEKALNDYIHVGLYQKIEDKKMYEGTLKSYNDDEIILEVKDKTRRKTLTVPRKLIANIRFAIEF.

Belongs to the RimP family.

The protein localises to the cytoplasm. Its function is as follows. Required for maturation of 30S ribosomal subunits. The sequence is that of Ribosome maturation factor RimP from Lactobacillus acidophilus (strain ATCC 700396 / NCK56 / N2 / NCFM).